The chain runs to 85 residues: CDC42 small effector protein homolog (85 aa).

2 S-palmitoyl cysteine lipidation sites follow: Cys-14 and Cys-15. A CRIB domain is found at 37–50 (IGNPTNFVHTGHIG). Phosphoserine is present on residues Ser-78 and Ser-81.

It belongs to the CDC42SE/SPEC family.

The protein resides in the cytoplasm. It localises to the cytoskeleton. The protein localises to the cell membrane. Probably involved in the organization of the actin cytoskeleton by acting downstream of CDC42, inducing actin filament assembly. In Drosophila melanogaster (Fruit fly), this protein is CDC42 small effector protein homolog (Spec2).